Here is a 273-residue protein sequence, read N- to C-terminus: Large ribosomal subunit protein uL2 (273 aa).

The disordered stretch occupies residues 224-264 (AMNPVDHPHGGGEGRNFGKHPVTPWGIQTKGKKTRKNKRTD). Positions 253–264 (KGKKTRKNKRTD) are enriched in basic residues.

This sequence belongs to the universal ribosomal protein uL2 family. Part of the 50S ribosomal subunit. Forms a bridge to the 30S subunit in the 70S ribosome.

One of the primary rRNA binding proteins. Required for association of the 30S and 50S subunits to form the 70S ribosome, for tRNA binding and peptide bond formation. It has been suggested to have peptidyltransferase activity; this is somewhat controversial. Makes several contacts with the 16S rRNA in the 70S ribosome. The polypeptide is Large ribosomal subunit protein uL2 (Buchnera aphidicola subsp. Acyrthosiphon pisum (strain 5A)).